Consider the following 772-residue polypeptide: 5-methyltetrahydropteroyltriglutamate--homocysteine methyltransferase (772 aa).

5-methyltetrahydropteroyltri-L-glutamate contacts are provided by residues 24-27 (RELK) and Lys120. Residues 404 to 428 (DPAVRSRTAATTDADARRSGPYPER) form a disordered region. Residues 446–448 (IGS) and Glu499 each bind L-homocysteine. Residues 446-448 (IGS) and Glu499 each bind L-methionine. A 5-methyltetrahydropteroyltri-L-glutamate-binding site is contributed by Trp576. Asp614 contributes to the L-homocysteine binding site. Asp614 serves as a coordination point for L-methionine. Glu620 serves as a coordination point for 5-methyltetrahydropteroyltri-L-glutamate. The Zn(2+) site is built by His656, Cys658, and Glu680. His709 acts as the Proton donor in catalysis. Cys741 serves as a coordination point for Zn(2+).

The protein belongs to the vitamin-B12 independent methionine synthase family. Zn(2+) is required as a cofactor.

It catalyses the reaction 5-methyltetrahydropteroyltri-L-glutamate + L-homocysteine = tetrahydropteroyltri-L-glutamate + L-methionine. It participates in amino-acid biosynthesis; L-methionine biosynthesis via de novo pathway; L-methionine from L-homocysteine (MetE route): step 1/1. Functionally, catalyzes the transfer of a methyl group from 5-methyltetrahydrofolate to homocysteine resulting in methionine formation. The polypeptide is 5-methyltetrahydropteroyltriglutamate--homocysteine methyltransferase (Streptomyces avermitilis (strain ATCC 31267 / DSM 46492 / JCM 5070 / NBRC 14893 / NCIMB 12804 / NRRL 8165 / MA-4680)).